We begin with the raw amino-acid sequence, 991 residues long: Pro-apoptotic serine protease NMA111 (991 aa).

A disordered region spans residues 1–57 (MTVGKRKLSNGTVNEAKRLDDHVPVVAPSTNPDFENANGEDNEDIDDYSSEGEMSPQ). Residues 38 to 50 (NGEDNEDIDDYSS) show a composition bias toward acidic residues. The interval 86–269 (HVSNFDTESS…LPVYRPLRAL (184 aa)) is serine protease. Catalysis depends on charge relay system residues histidine 117, aspartate 148, and serine 231. PDZ domains follow at residues 296–374 (RRLG…QRNG) and 885–957 (PHHG…VSFD).

Belongs to the peptidase S1C family.

It is found in the nucleus. Functionally, nuclear serine protease which mediates apoptosis. The chain is Pro-apoptotic serine protease NMA111 (NMA111) from Meyerozyma guilliermondii (strain ATCC 6260 / CBS 566 / DSM 6381 / JCM 1539 / NBRC 10279 / NRRL Y-324) (Yeast).